A 664-amino-acid polypeptide reads, in one-letter code: UvrABC system protein C (664 aa).

The region spanning L63–I141 is the GIY-YIG domain. The region spanning T254 to I289 is the UVR domain.

This sequence belongs to the UvrC family. As to quaternary structure, interacts with UvrB in an incision complex.

The protein resides in the cytoplasm. The UvrABC repair system catalyzes the recognition and processing of DNA lesions. UvrC both incises the 5' and 3' sides of the lesion. The N-terminal half is responsible for the 3' incision and the C-terminal half is responsible for the 5' incision. In Zymomonas mobilis subsp. mobilis (strain ATCC 31821 / ZM4 / CP4), this protein is UvrABC system protein C.